We begin with the raw amino-acid sequence, 186 residues long: MRPQLRGNQRNRIRWWQHNSKKCNQTEKWHNVDWIHYEYPTHKMCELGNYHQTTPRHDICFDCNDTSLTIYNLTTRNAGKYTRHHRDNGQEENYYVTVLIGDTTLSTLGTCPVRYKESRNTENTIGSNIIKTIEKANIPLGIHAVWAGVVVSVALIALYMGSHRIPKKPHYTKLPKYDPDEFWTKA.

Residues Asn-24, Asn-64, and Asn-72 are each glycosylated (N-linked (GlcNAc...) asparagine; by host). The helical transmembrane segment at 143–163 threads the bilayer; it reads HAVWAGVVVSVALIALYMGSH.

Belongs to the RL11 family.

It localises to the virion membrane. In Human cytomegalovirus (strain AD169) (HHV-5), this protein is Protein TRL14.